A 640-amino-acid polypeptide reads, in one-letter code: 1,4-alpha-glucan branching enzyme GlgB (640 aa).

The active-site Nucleophile is aspartate 317. The active-site Proton donor is glutamate 370.

Belongs to the glycosyl hydrolase 13 family. GlgB subfamily. Monomer.

The catalysed reaction is Transfers a segment of a (1-&gt;4)-alpha-D-glucan chain to a primary hydroxy group in a similar glucan chain.. The protein operates within glycan biosynthesis; glycogen biosynthesis. Catalyzes the formation of the alpha-1,6-glucosidic linkages in glycogen by scission of a 1,4-alpha-linked oligosaccharide from growing alpha-1,4-glucan chains and the subsequent attachment of the oligosaccharide to the alpha-1,6 position. This chain is 1,4-alpha-glucan branching enzyme GlgB, found in Nitratidesulfovibrio vulgaris (strain DP4) (Desulfovibrio vulgaris).